We begin with the raw amino-acid sequence, 1171 residues long: ATP-dependent helicase/deoxyribonuclease subunit B (1171 aa).

The 390-residue stretch at 1–390 (MSLRFVIGRA…HPLVECIRSA (390 aa)) folds into the UvrD-like helicase ATP-binding domain. Position 8 to 15 (8 to 15 (GRAGSGKS)) interacts with ATP. In terms of domain architecture, UvrD-like helicase C-terminal spans 281 to 587 (MEQPRFHSPA…QFANIPPSLD (307 aa)). [4Fe-4S] cluster-binding residues include cysteine 805, cysteine 1129, cysteine 1132, and cysteine 1138.

It belongs to the helicase family. AddB/RexB type 1 subfamily. In terms of assembly, heterodimer of AddA and AddB. Mg(2+) is required as a cofactor. Requires [4Fe-4S] cluster as cofactor.

Its function is as follows. The heterodimer acts as both an ATP-dependent DNA helicase and an ATP-dependent, dual-direction single-stranded exonuclease. Recognizes the chi site generating a DNA molecule suitable for the initiation of homologous recombination. The AddB subunit has 5' -&gt; 3' nuclease activity but not helicase activity. In Bacillus cereus (strain ATCC 14579 / DSM 31 / CCUG 7414 / JCM 2152 / NBRC 15305 / NCIMB 9373 / NCTC 2599 / NRRL B-3711), this protein is ATP-dependent helicase/deoxyribonuclease subunit B.